We begin with the raw amino-acid sequence, 383 residues long: tRNA-specific 2-thiouridylase MnmA (383 aa).

Residues 30 to 37 and Met56 contribute to the ATP site; that span reads GMSGGVDS. An interaction with target base in tRNA region spans residues 116 to 118; sequence NPD. Cys121 serves as the catalytic Nucleophile. A disulfide bridge connects residues Cys121 and Cys218. Gly146 is an ATP binding site. Positions 168-170 are interaction with tRNA; that stretch reads KDQ. The active-site Cysteine persulfide intermediate is Cys218. The interval 330-331 is interaction with tRNA; sequence RY.

The protein belongs to the MnmA/TRMU family.

It is found in the cytoplasm. It carries out the reaction S-sulfanyl-L-cysteinyl-[protein] + uridine(34) in tRNA + AH2 + ATP = 2-thiouridine(34) in tRNA + L-cysteinyl-[protein] + A + AMP + diphosphate + H(+). Its function is as follows. Catalyzes the 2-thiolation of uridine at the wobble position (U34) of tRNA, leading to the formation of s(2)U34. In Haemophilus influenzae (strain 86-028NP), this protein is tRNA-specific 2-thiouridylase MnmA.